The primary structure comprises 618 residues: UvrABC system protein C (618 aa).

The region spanning 19–97 (SEPGIYRMLD…IKALRPKYNV (79 aa)) is the GIY-YIG domain. In terms of domain architecture, UVR spans 208 to 243 (QIILDELAERMKNAVSQLNFEEAAVLRDQIKNLRLI).

Belongs to the UvrC family. Interacts with UvrB in an incision complex.

It localises to the cytoplasm. The UvrABC repair system catalyzes the recognition and processing of DNA lesions. UvrC both incises the 5' and 3' sides of the lesion. The N-terminal half is responsible for the 3' incision and the C-terminal half is responsible for the 5' incision. This is UvrABC system protein C from Legionella pneumophila (strain Lens).